The chain runs to 312 residues: Nicotinamide adenine dinucleotide transporter 1, chloroplastic (312 aa).

Solcar repeat units follow at residues 11-103, 111-199, and 211-299; these read KNVL…LKSF, LSVG…IKVY, and LNAR…VHRF. 6 helical membrane passes run 17-37, 78-98, 117-137, 171-191, 216-232, and 271-293; these read AAAGAAAGVVAATFVCPLDVI, GLSPTVMALLSNWAIYFTMYD, VLAASGAGAATTIATNPLWVV, GLYSGLVPALAGISHVAIQFP, VAVASSIAKIFASTLTY, and FYRGCATNLLRTTPAAVITFTSF.

Belongs to the mitochondrial carrier (TC 2.A.29) family. Highly expressed in young leaf mesophyll cells, root tips and at the branches of adventitious roots. Low expression in all flower tissues and not detected in siliques and seeds.

It is found in the plastid. The protein localises to the chloroplast membrane. Its activity is regulated as follows. Inhibited by pyridoxal 5'-phosphate, bathophenanthroline, tannic acid, mersalyl, mercuric chloride, p-hydroxymercuribenzoate, p-hydroxymercuribenzoate sulfonate, bromocresol purple and N-ethylmaleimide. In terms of biological role, mediates the NAD(+) import into chloroplast. Favors the NAD(+)(in)/ADP or AMP(out) antiport exchange, but is also able to catalyze a low unidirectional transport (uniport) of NAD(+). Transports NAD(+), nicotinic acid adenine dinucleotide, nicotinamide mononucleotide, nicotinic acid mononucleotide, FAD, FMN, TTP, TDP, TMP, UTP, UDP, UMP, CTP, CDP, CMP, GTP, GDP, GMP, 3'-AMP, ATP, ADP, and AMP, has low transport activity with cAMP, pyrophosphate, NADH and alpha-NAD(+), and has no activity with NADP(+), NADPH, nicotinamide, nicotinic acid, adenosine, thiamine mono- or diphosphate, inorganic phosphate, CoA, folate, NaCl, malate, malonate, citrate, fumarate, aspartate, glutamate, S-adenosylmethionine, lysine, arginine, and ornithine. In Arabidopsis thaliana (Mouse-ear cress), this protein is Nicotinamide adenine dinucleotide transporter 1, chloroplastic (NDT1).